The following is a 133-amino-acid chain: Large ribosomal subunit protein uL15 (133 aa).

A disordered region spans residues 1–64 (MGLENLKPAK…QPLQRRLPKI (64 aa)).

It belongs to the universal ribosomal protein uL15 family. As to quaternary structure, part of the 50S ribosomal subunit.

Functionally, binds to the 23S rRNA. The protein is Large ribosomal subunit protein uL15 of Helicobacter pylori (strain G27).